A 309-amino-acid polypeptide reads, in one-letter code: Ribonuclease Z (309 aa).

Zn(2+)-binding residues include histidine 63, histidine 65, aspartate 67, histidine 68, histidine 141, aspartate 212, and histidine 270. Catalysis depends on aspartate 67, which acts as the Proton acceptor.

The protein belongs to the RNase Z family. Homodimer. It depends on Zn(2+) as a cofactor.

The enzyme catalyses Endonucleolytic cleavage of RNA, removing extra 3' nucleotides from tRNA precursor, generating 3' termini of tRNAs. A 3'-hydroxy group is left at the tRNA terminus and a 5'-phosphoryl group is left at the trailer molecule.. Its function is as follows. Zinc phosphodiesterase, which displays some tRNA 3'-processing endonuclease activity. Probably involved in tRNA maturation, by removing a 3'-trailer from precursor tRNA. The protein is Ribonuclease Z of Lactobacillus johnsonii (strain CNCM I-12250 / La1 / NCC 533).